Here is a 183-residue protein sequence, read N- to C-terminus: GMP synthase [glutamine-hydrolyzing] subunit A (183 aa).

The Glutamine amidotransferase type-1 domain occupies 2-183; the sequence is KIYVIYNYGQ…YRNFIEICKK (182 aa). Cysteine 74 functions as the Nucleophile in the catalytic mechanism. Catalysis depends on residues histidine 161 and glutamate 163.

In terms of assembly, heterodimer composed of a glutamine amidotransferase subunit (A) and a GMP-binding subunit (B).

It catalyses the reaction XMP + L-glutamine + ATP + H2O = GMP + L-glutamate + AMP + diphosphate + 2 H(+). It participates in purine metabolism; GMP biosynthesis; GMP from XMP (L-Gln route): step 1/1. In terms of biological role, catalyzes the synthesis of GMP from XMP. This Archaeoglobus fulgidus (strain ATCC 49558 / DSM 4304 / JCM 9628 / NBRC 100126 / VC-16) protein is GMP synthase [glutamine-hydrolyzing] subunit A.